A 159-amino-acid polypeptide reads, in one-letter code: uncharacterized protein (159 aa).

2 disordered regions span residues 1–23 and 91–110; these read MEQD…KGQA and AGGG…GPAA.

This is an uncharacterized protein from Homo sapiens (Human).